We begin with the raw amino-acid sequence, 217 residues long: Probable transaldolase (217 aa).

K83 (schiff-base intermediate with substrate) is an active-site residue.

It belongs to the transaldolase family. Type 3B subfamily.

The protein resides in the cytoplasm. The enzyme catalyses D-sedoheptulose 7-phosphate + D-glyceraldehyde 3-phosphate = D-erythrose 4-phosphate + beta-D-fructose 6-phosphate. It participates in carbohydrate degradation; pentose phosphate pathway; D-glyceraldehyde 3-phosphate and beta-D-fructose 6-phosphate from D-ribose 5-phosphate and D-xylulose 5-phosphate (non-oxidative stage): step 2/3. Transaldolase is important for the balance of metabolites in the pentose-phosphate pathway. The chain is Probable transaldolase from Caulobacter sp. (strain K31).